A 341-amino-acid chain; its full sequence is Methionine import ATP-binding protein MetN (341 aa).

Residues 2 to 237 (IELCGLKKSF…PESLARKMLY (236 aa)) enclose the ABC transporter domain. ATP is bound at residue 34-41 (GKSGAGKS).

It belongs to the ABC transporter superfamily. Methionine importer (TC 3.A.1.24) family. The complex is composed of two ATP-binding proteins (MetN), two transmembrane proteins (MetI) and a solute-binding protein (MetQ).

Its subcellular location is the cell inner membrane. It catalyses the reaction L-methionine(out) + ATP + H2O = L-methionine(in) + ADP + phosphate + H(+). The enzyme catalyses D-methionine(out) + ATP + H2O = D-methionine(in) + ADP + phosphate + H(+). Its function is as follows. Part of the ABC transporter complex MetNIQ involved in methionine import. Responsible for energy coupling to the transport system. This is Methionine import ATP-binding protein MetN from Legionella pneumophila (strain Lens).